We begin with the raw amino-acid sequence, 89 residues long: Putative regulatory protein PCC8801_0196 (89 aa).

Belongs to the RemA family.

This Rippkaea orientalis (strain PCC 8801 / RF-1) (Cyanothece sp. (strain PCC 8801)) protein is Putative regulatory protein PCC8801_0196.